Here is a 275-residue protein sequence, read N- to C-terminus: Anthracycline biosynthesis protein DauV (275 aa).

VOC domains are found at residues 8–136 (APAW…VWRK) and 150–263 (SVGW…VVEL).

The protein operates within antibiotic biosynthesis; daunorubicin biosynthesis. Its pathway is antibiotic biosynthesis; carminomycin biosynthesis. In terms of biological role, involved in the biosynthesis of the anthracyclines carminomycin and daunorubicin (daunomycin) which are aromatic polyketide antibiotics that exhibit high cytotoxicity and are widely applied in the chemotherapy of a variety of cancers. Acts jointly with DoxA in the conversion of 13-deoxycarminomycin and 13-deoxydaunorubicin to yield carminomycin and daunorubicin, respectively. The protein is Anthracycline biosynthesis protein DauV (dauV) of Streptomyces sp. (strain C5).